The sequence spans 365 residues: Chorismate synthase (365 aa).

Positions 48 and 54 each coordinate NADP(+). Residues 125-127 (RSS), 238-239 (NA), Gly278, 293-297 (KPTSS), and Arg319 contribute to the FMN site.

The protein belongs to the chorismate synthase family. As to quaternary structure, homotetramer. The cofactor is FMNH2.

The enzyme catalyses 5-O-(1-carboxyvinyl)-3-phosphoshikimate = chorismate + phosphate. Its pathway is metabolic intermediate biosynthesis; chorismate biosynthesis; chorismate from D-erythrose 4-phosphate and phosphoenolpyruvate: step 7/7. Its function is as follows. Catalyzes the anti-1,4-elimination of the C-3 phosphate and the C-6 proR hydrogen from 5-enolpyruvylshikimate-3-phosphate (EPSP) to yield chorismate, which is the branch point compound that serves as the starting substrate for the three terminal pathways of aromatic amino acid biosynthesis. This reaction introduces a second double bond into the aromatic ring system. This chain is Chorismate synthase, found in Janthinobacterium sp. (strain Marseille) (Minibacterium massiliensis).